The following is a 1024-amino-acid chain: Protein tiptop (1024 aa).

A compositionally biased stretch (polar residues) spans 20 to 35 (ELTSPRCQSRDSNTSA). Disordered stretches follow at residues 20 to 40 (ELTS…AGAG) and 138 to 215 (EGEV…ISAD). Residues 159-175 (DDQEEDQEQDQEQEQEQ) show a composition bias toward acidic residues. A C2H2-type 1 zinc finger spans residues 317-341 (FKCVWCKQSFSTLANLTAHMKETQH). A disordered region spans residues 350-392 (LPTGGVGTPSAPPPTRLATSASNSACSSSSSSTSSSSNSSKSE). The span at 368–391 (TSASNSACSSSSSSTSSSSNSSKS) shows a compositional bias: low complexity. Residues 426-450 (LKCMWCGQSFRSLAEMTSHMQETQH) form a C2H2-type 2 zinc finger. 5 disordered regions span residues 466-489 (GDER…SSPS), 519-576 (AQKS…SLDS), 712-759 (SRDR…IKAE), 786-818 (FSME…SLLA), and 868-891 (ETTD…ASAT). The segment covering 477 to 489 (VPSTSTAAPSSPS) has biased composition (low complexity). Residues 499–523 (LTCKVCDQAFGSLKELSTHMAQKSH) form a C2H2-type 3 zinc finger. Residues 527–537 (SPAPSASPPAA) are compositionally biased toward low complexity. Residues 543–558 (KRGRQNRNEKRKKSLP) show a composition bias toward basic residues. Residues 718–729 (SESSSASRVESS) are compositionally biased toward low complexity. Residues 745–755 (TPAPPPPPPPT) show a composition bias toward pro residues. Over residues 786-795 (FSMEACRESP) the composition is skewed to basic and acidic residues. Polar residues predominate over residues 796-808 (RSVSKSPAPQTER). Residues 874–891 (STGLRSASSAGSSTASAT) show a composition bias toward low complexity. A C2H2-type 4 zinc finger spans residues 926–949 (IKCSYCDTPFASKGAYRHHLSKVH). The disordered stretch occupies residues 954–1004 (AGEDSPRLKSPAVQSPRSMPLASPRRSASRSPATGSQQPPPSPTISPYDES). Residues 968–990 (SPRSMPLASPRRSASRSPATGSQ) are compositionally biased toward low complexity.

It belongs to the teashirt C2H2-type zinc-finger protein family. In terms of tissue distribution, expression in the Malpighian tubules (MTs) and stomatogastric nervous system starts at embryonic stage 10. At stage 11, expression in the head domain is initiated in the clypeolabrum in two bilaterally symmetric clusters of cells. At stage 12, expression appears in the central nervous system (CNS) of the trunk and the epidermis. The staining in the hindgut is maintained throughout embryogenesis. At stage 13, expression is present in elongating MTs. The anterior staining is detected in cells that invaginate into the stomodeum and by stage 15 onwards, in cells close to the pharynx. Also expressed in cells of the brain, the second constriction of the gut, the trunk epidermis, the anterior segments of the CNS (the three thoracic and the first two abdominal segments) and in the MTs. From stage 12 onwards, tsh and tio are colocalized in some cells.

It is found in the nucleus. Tiptop (tio) and teashirt (tsh) have, on the whole, common activities. Tio and tsh repress each other's expression and tsh has a crucial role for trunk patterning that is in part masked by ectopic expression of tiptop. Both genes share a common activity required for the activation of Ser and svb and the maintenance of en and wg. This chain is Protein tiptop (tio), found in Drosophila melanogaster (Fruit fly).